The following is a 1317-amino-acid chain: DNA-directed RNA polymerase subunit beta' (1317 aa).

Zn(2+)-binding residues include cysteine 60, cysteine 62, cysteine 75, and cysteine 78. Mg(2+) is bound by residues aspartate 535, aspartate 537, and aspartate 539. Zn(2+) contacts are provided by cysteine 890, cysteine 967, cysteine 974, and cysteine 977.

This sequence belongs to the RNA polymerase beta' chain family. In terms of assembly, the RNAP catalytic core consists of 2 alpha, 1 beta, 1 beta' and 1 omega subunit. When a sigma factor is associated with the core the holoenzyme is formed, which can initiate transcription. Mg(2+) is required as a cofactor. Zn(2+) serves as cofactor.

It carries out the reaction RNA(n) + a ribonucleoside 5'-triphosphate = RNA(n+1) + diphosphate. Functionally, DNA-dependent RNA polymerase catalyzes the transcription of DNA into RNA using the four ribonucleoside triphosphates as substrates. This is DNA-directed RNA polymerase subunit beta' from Mycolicibacterium smegmatis (strain ATCC 700084 / mc(2)155) (Mycobacterium smegmatis).